Here is an 806-residue protein sequence, read N- to C-terminus: Acetyl-CoA decarbonylase/synthase complex subunit alpha 1 (806 aa).

[4Fe-4S] cluster-binding residues include Cys-73, Cys-76, Cys-77, Cys-79, Cys-84, and Cys-94. His-117 contributes to the CO binding site. Residues His-250, Cys-278, and Cys-323 each coordinate [Ni-4Fe-4S] cluster. 4Fe-4S ferredoxin-type domains lie at 407 to 436 and 446 to 475; these read DEEFTNWVMKCADCGACMIACPEELDIPEA and SYLDILHDQCIGCRRCEQVCKKEIPILNII. 8 residues coordinate [4Fe-4S] cluster: Cys-417, Cys-420, Cys-423, Cys-427, Cys-455, Cys-458, Cys-461, and Cys-465. Positions 523, 552, and 587 each coordinate [Ni-4Fe-4S] cluster.

Belongs to the Ni-containing carbon monoxide dehydrogenase family. Heterotetramer of two alpha and two epsilon subunits. The ACDS complex is made up of alpha, epsilon, beta, gamma and delta subunits with a probable stoichiometry of (alpha(2)epsilon(2))(4)-beta(8)-(gamma(1)delta(1))(8). [4Fe-4S] cluster serves as cofactor. The cofactor is [Ni-4Fe-4S] cluster.

It carries out the reaction CO + 2 oxidized [2Fe-2S]-[ferredoxin] + H2O = 2 reduced [2Fe-2S]-[ferredoxin] + CO2 + 2 H(+). Its pathway is one-carbon metabolism; methanogenesis from acetate. Its activity is regulated as follows. Carbon monoxide dehydrogenase activity is inhibited by KCN and is rapidly inactivated by O(2). Part of the ACDS complex that catalyzes the reversible cleavage of acetyl-CoA, allowing growth on acetate as sole source of carbon and energy. The alpha-epsilon subcomponent functions as a carbon monoxide dehydrogenase. The chain is Acetyl-CoA decarbonylase/synthase complex subunit alpha 1 from Methanosarcina barkeri (strain Fusaro / DSM 804).